We begin with the raw amino-acid sequence, 391 residues long: Glutamate 5-kinase (391 aa).

An ATP-binding site is contributed by Lys17. Positions 57, 144, and 156 each coordinate substrate. ATP-binding positions include 176–177 (SD) and 216–222 (TGGMTTK). The PUA domain maps to 278-356 (QGQIVIDDGA…AWLAAEMGPA (79 aa)). Positions 370-391 (SRRRKAEPSSRNQKSSGSRVTS) are disordered. Residues 378–391 (SSRNQKSSGSRVTS) show a composition bias toward polar residues.

This sequence belongs to the glutamate 5-kinase family.

Its subcellular location is the cytoplasm. The enzyme catalyses L-glutamate + ATP = L-glutamyl 5-phosphate + ADP. It functions in the pathway amino-acid biosynthesis; L-proline biosynthesis; L-glutamate 5-semialdehyde from L-glutamate: step 1/2. Functionally, catalyzes the transfer of a phosphate group to glutamate to form L-glutamate 5-phosphate. The polypeptide is Glutamate 5-kinase (Cutibacterium acnes (strain DSM 16379 / KPA171202) (Propionibacterium acnes)).